Reading from the N-terminus, the 804-residue chain is MRALWVLGLCCVLLTFGSVRADDEVDVDGTVEEDLGKSREGSRTDDEVVQREEEAIQLDGLNASQIRELREKSEKFAFQAEVNRMMKLIINSLYKNKEIFLRELISNASDALDKIRLISLTDENALSGNEELTVKIKCDKEKNLLHVTDTGVGMTREELVKNLGTIAKSGTSEFLNKMTEAQEDGQSTSELIGQFGVGFCSAFLVADKVIVTSKHNNDTQHIWESDSNEFSVIADPRGNTLGRGTTITLVLKEEASDYLELDTIKNLVKKYSQFINFPIYVWSSKTETVEEPMEEEEAAKEEKEESDDEAAVEEEEEEKKPKTKKVEKTVWDWELMNDIKPIWQRPSKEVEEDEYKAFYKSFSKESDDPMAYIHFTAEGEVTFKSILFVPTSAPRGLFDEYGSKKSDYIKLYVRRVFITDDFHDMMPKYLNFVKGVVDSDDLPLNVSRETLQQHKLLKVIRKKLVRKTLDMIKKIADDKYNDTFWKEFGTNIKLGVIEDHSNRTRLAKLLRFQSSHHPTDITSLDQYVERMKEKQDKIYFMAGSSRKEAESSPFVERLLKKGYEVIYLTEPVDEYCIQALPEFDGKRFQNVAKEGVKFDESEKTKESREAIEKEFEPLLNWMKDKALKDKIEKAVVSQRLTESPCALVASQYGWSGNMERIMKAQAYQTGKDISTNYYASQKKTFEINPRHPLIRDMLRRIKEDEDDKTVLDLAVVLFETATLRSGYLLPDTKAYGDRIERMLRLSLNIDPDAKVEEEPEEEPEETTEDTTEDTEQDEDEEMDVGTDEEEQETAKESTAEKDEL.

An N-terminal signal peptide occupies residues methionine 1–alanine 21. The short motif at serine 42 to threonine 44 is the SRT pseudosubstrate motif element. Residue asparagine 62 is glycosylated (N-linked (GlcNAc...) asparagine). Serine 64 carries the phosphoserine modification. Asparagine 107 is a glycosylation site (N-linked (GlcNAc...) asparagine). 3 residues coordinate ATP: asparagine 107, aspartate 149, and asparagine 162. Position 168 is an N6-(2-hydroxyisobutyryl)lysine (lysine 168). Serine 172 bears the Phosphoserine mark. An ATP-binding site is contributed by phenylalanine 199. Asparagine 217 carries an N-linked (GlcNAc...) asparagine glycan. Positions threonine 288 to threonine 323 are disordered. Over residues valine 289–glutamate 317 the composition is skewed to acidic residues. Serine 306 and serine 403 each carry phosphoserine. The residue at position 404 (lysine 404) is an N6-succinyllysine. An N-linked (GlcNAc...) asparagine glycan is attached at asparagine 445. A Phosphoserine modification is found at serine 447. Residue lysine 479 is modified to N6-acetyllysine. N-linked (GlcNAc...) asparagine glycans are attached at residues asparagine 481 and asparagine 502. Lysine 633 is modified (N6-succinyllysine). The segment at aspartate 750 to leucine 804 is disordered. Residues glutamate 757 to glutamine 791 show a composition bias toward acidic residues. Threonine 786 bears the Phosphothreonine mark. Over residues glutamate 792–leucine 804 the composition is skewed to basic and acidic residues. A Prevents secretion from ER motif is present at residues lysine 801–leucine 804.

The protein belongs to the heat shock protein 90 family. In terms of assembly, homodimer; disulfide-linked. Component of an EIF2 complex at least composed of CELF1/CUGBP1, CALR, CALR3, EIF2S1, EIF2S2, HSP90B1 and HSPA5. Part of a large chaperone multiprotein complex comprising DNAJB11, HSP90B1, HSPA5, HYOU, PDIA2, PDIA4, PDIA6, PPIB, SDF2L1, UGGT1 and very small amounts of ERP29, but not, or at very low levels, CALR nor CANX. Interacts with AIMP1; regulates its retention in the endoplasmic reticulum. Hyperglycosylated form interacts with OS9; promoting its degradation by the endoplasmic reticulum associated degradation (ERAD). Interacts with CNPY3. This interaction is disrupted in the presence of ATP. Interacts with TLR4 and TLR9, but not with TLR3. Interacts with MZB1 in a calcium-dependent manner. Interacts with METTL23. Interacts with IL1B; the interaction facilitates cargo translocation into the ERGIC. Interacts with EIF2AK3. Post-translationally, phosphorylated by CK2. In terms of processing, N-glycosylated cotranslationally at Asn-217 by STT3A-containing OST-A complex: this glycosylation is constitutive. In response to various stress, 5 additional facultative sites (Asn-62, Asn-107, Asn-445, Asn-481 and Asn-502) can be glycosylated post-translationally by STT3B-containing OST-B complex, leading to a hyperglycosylated form that is degraded by the ER-associated degradation (ERAD) pathway. In normal conditions, the OST-A complex together with CCDC134 prevent glycosylation at facultative sites during protein folding, thereby preventing hyperglycosylation. Mechanistically, nascent HSP90B1 is tethered during translation to a specialized CCDC134-containing translocon that forms a microenvironment for its folding, in which STT3A associates with the SRT pseudosubstrate motif, and prevents access to facultative glycosylation sites until folding is completed, rendering its facultative sites inaccessible to the OST-B complex.

It localises to the endoplasmic reticulum lumen. The protein resides in the sarcoplasmic reticulum lumen. The protein localises to the melanosome. It carries out the reaction ATP + H2O = ADP + phosphate + H(+). In terms of biological role, ATP-dependent chaperone involved in the processing of proteins in the endoplasmic reticulum, regulating their transport. Together with MESD, acts as a modulator of the Wnt pathway by promoting the folding of LRP6, a coreceptor of the canonical Wnt pathway. When associated with CNPY3, required for proper folding of Toll-like receptors. Promotes folding and trafficking of TLR4 to the cell surface. May participate in the unfolding of cytosolic leaderless cargos (lacking the secretion signal sequence) such as the interleukin 1/IL-1 to facilitate their translocation into the ERGIC (endoplasmic reticulum-Golgi intermediate compartment) and secretion; the translocation process is mediated by the cargo receptor TMED10. The sequence is that of Endoplasmin (HSP90B1) from Pongo abelii (Sumatran orangutan).